A 419-amino-acid polypeptide reads, in one-letter code: Argininosuccinate synthase (419 aa).

ATP contacts are provided by residues 9 to 17 (AYSGGLDTS) and alanine 35. L-citrulline-binding residues include tyrosine 86 and serine 91. 114–122 (AHGATGKGN) is a binding site for ATP. 3 residues coordinate L-aspartate: threonine 118, asparagine 122, and aspartate 123. Residue asparagine 122 participates in L-citrulline binding. L-citrulline is bound by residues arginine 126, serine 179, serine 188, glutamate 270, and tyrosine 282.

This sequence belongs to the argininosuccinate synthase family. Type 1 subfamily. In terms of assembly, homotetramer.

The catalysed reaction is L-citrulline + L-aspartate + ATP = 2-(N(omega)-L-arginino)succinate + AMP + diphosphate + H(+). The protein operates within amino-acid biosynthesis; L-arginine biosynthesis; L-arginine from L-ornithine and carbamoyl phosphate: step 2/3. It participates in nitrogen metabolism; urea cycle; (N(omega)-L-arginino)succinate from L-aspartate and L-citrulline: step 1/1. This chain is Argininosuccinate synthase, found in Drosophila melanogaster (Fruit fly).